Here is a 187-residue protein sequence, read N- to C-terminus: Orotate phosphoribosyltransferase (187 aa).

5-phospho-alpha-D-ribose 1-diphosphate is bound by residues R103, K104, K107, and 129–137; that span reads EDVTTSGGS. Residues T133 and R161 each contribute to the orotate site.

Belongs to the purine/pyrimidine phosphoribosyltransferase family. PyrE subfamily. As to quaternary structure, homodimer. It depends on Mg(2+) as a cofactor.

It catalyses the reaction orotidine 5'-phosphate + diphosphate = orotate + 5-phospho-alpha-D-ribose 1-diphosphate. Its pathway is pyrimidine metabolism; UMP biosynthesis via de novo pathway; UMP from orotate: step 1/2. Functionally, catalyzes the transfer of a ribosyl phosphate group from 5-phosphoribose 1-diphosphate to orotate, leading to the formation of orotidine monophosphate (OMP). The sequence is that of Orotate phosphoribosyltransferase from Methanosarcina acetivorans (strain ATCC 35395 / DSM 2834 / JCM 12185 / C2A).